Here is a 146-residue protein sequence, read N- to C-terminus: Prolactin-inducible protein homolog (146 aa).

Positions Met1–Ala28 are cleaved as a signal peptide. Gln29 carries the pyrrolidone carboxylic acid modification. Disulfide bonds link Cys65/Cys91 and Cys89/Cys123. N-linked (GlcNAc...) asparagine glycosylation occurs at Asn105.

It belongs to the PIP family. Monomer. Interacts with AZGP1.

The protein resides in the secreted. This is Prolactin-inducible protein homolog (PIP) from Pan troglodytes (Chimpanzee).